Here is a 390-residue protein sequence, read N- to C-terminus: Magnesium-protoporphyrin IX monomethyl ester [oxidative] cyclase (390 aa).

This sequence belongs to the AcsF family. Fe cation is required as a cofactor.

It carries out the reaction Mg-protoporphyrin IX 13-monomethyl ester + 3 NADPH + 3 O2 + 2 H(+) = 3,8-divinyl protochlorophyllide a + 3 NADP(+) + 5 H2O. It participates in porphyrin-containing compound metabolism; chlorophyll biosynthesis (light-independent). Catalyzes the formation of the isocyclic ring in chlorophyll biosynthesis. Mediates the cyclase reaction, which results in the formation of divinylprotochlorophyllide (Pchlide) characteristic of all chlorophylls from magnesium-protoporphyrin IX 13-monomethyl ester (MgPMME). The polypeptide is Magnesium-protoporphyrin IX monomethyl ester [oxidative] cyclase (Prochlorococcus marinus (strain MIT 9215)).